The primary structure comprises 447 residues: uncharacterized protein (447 aa).

Belongs to the class-II fumarase/aspartase family.

Its subcellular location is the cytoplasm. It localises to the nucleus. This is an uncharacterized protein from Schizosaccharomyces pombe (strain 972 / ATCC 24843) (Fission yeast).